Here is an 876-residue protein sequence, read N- to C-terminus: Bifunctional uridylyltransferase/uridylyl-removing enzyme (876 aa).

The tract at residues 1-332 (MPYQSPITFQ…NNGEEAEAVI (332 aa)) is uridylyltransferase. The interval 333–692 (IDDDFQRRGN…LSKKATRGGT (360 aa)) is uridylyl-removing. Positions 451–573 (VDEHSIRLLK…VRDEERLEYL (123 aa)) constitute an HD domain. 2 ACT domains span residues 693–777 (EVFI…RIPR) and 800–876 (LMEF…PSAQ).

Belongs to the GlnD family. Mg(2+) is required as a cofactor.

It carries out the reaction [protein-PII]-L-tyrosine + UTP = [protein-PII]-uridylyl-L-tyrosine + diphosphate. The enzyme catalyses [protein-PII]-uridylyl-L-tyrosine + H2O = [protein-PII]-L-tyrosine + UMP + H(+). With respect to regulation, uridylyltransferase (UTase) activity is inhibited by glutamine, while glutamine activates uridylyl-removing (UR) activity. Modifies, by uridylylation and deuridylylation, the PII regulatory proteins (GlnB and homologs), in response to the nitrogen status of the cell that GlnD senses through the glutamine level. Under low glutamine levels, catalyzes the conversion of the PII proteins and UTP to PII-UMP and PPi, while under higher glutamine levels, GlnD hydrolyzes PII-UMP to PII and UMP (deuridylylation). Thus, controls uridylylation state and activity of the PII proteins, and plays an important role in the regulation of nitrogen assimilation and metabolism. This chain is Bifunctional uridylyltransferase/uridylyl-removing enzyme, found in Vibrio cholerae serotype O1 (strain ATCC 39315 / El Tor Inaba N16961).